Here is a 42-residue protein sequence, read N- to C-terminus: Photosystem I reaction center subunit IX (42 aa).

Residues 7–27 form a helical membrane-spanning segment; the sequence is YLSVAPVLSTLWFGALAGLLI.

Belongs to the PsaJ family.

It localises to the plastid. The protein localises to the chloroplast thylakoid membrane. May help in the organization of the PsaE and PsaF subunits. The chain is Photosystem I reaction center subunit IX from Platanus occidentalis (Sycamore).